The sequence spans 496 residues: Cytochrome P450 71D181 (496 aa).

The helical; Signal-anchor for type II membrane protein transmembrane segment at 1 to 21 threads the bilayer; it reads MDISISWVAIILVISSYFIFM. Residue cysteine 435 coordinates heme. Residues 471–496 form a disordered region; it reads MSETPGLSGPRKNPLIMVPTIHNPTS.

It belongs to the cytochrome P450 family. It depends on heme as a cofactor. As to expression, expressed at low levels in flowers, leaves and stems.

It localises to the membrane. The enzyme catalyses alpha-terpinene + 2 reduced [NADPH--hemoprotein reductase] + 2 O2 = carvacrol + 2 oxidized [NADPH--hemoprotein reductase] + 3 H2O + 2 H(+). It catalyses the reaction gamma-terpinene + 2 reduced [NADPH--hemoprotein reductase] + 2 O2 = carvacrol + 2 oxidized [NADPH--hemoprotein reductase] + 3 H2O + 2 H(+). The catalysed reaction is (4S)-limonene + reduced [NADPH--hemoprotein reductase] + O2 = (1S,5R)-carveol + oxidized [NADPH--hemoprotein reductase] + H2O + H(+). It carries out the reaction (4R)-limonene + reduced [NADPH--hemoprotein reductase] + O2 = (1R,5S)-carveol + oxidized [NADPH--hemoprotein reductase] + H2O + H(+). It functions in the pathway secondary metabolite biosynthesis; terpenoid biosynthesis. Functionally, involved in the biosynthesis of phenolic monoterpenes natural products thymol and carvacrol which have a broad range of biological activities acting as antimicrobial compounds, insecticides, antioxidants and pharmaceutical agents. Catalyzes the C2-hydroxylation of gamma-terpinene and alpha-terpinene to produce carvacrol. Also mediates the C6-hydroxylation of (4S)-limonene and (4R)-limonene to form carveol. In Origanum vulgare (Wild marjoram), this protein is Cytochrome P450 71D181.